Reading from the N-terminus, the 181-residue chain is Ribulose bisphosphate carboxylase small subunit 2B, chloroplastic (181 aa).

The N-terminal 54 residues, 1-54 (MASSMFSSTAVVTSPAQATMVAPFTGLKSSASFPVTRKANNDITSITSNGGRVS), are a transit peptide targeting the chloroplast.

It belongs to the RuBisCO small chain family. Heterohexadecamer of 8 large and 8 small subunits.

It is found in the plastid. The protein resides in the chloroplast. Functionally, ruBisCO catalyzes two reactions: the carboxylation of D-ribulose 1,5-bisphosphate, the primary event in carbon dioxide fixation, as well as the oxidative fragmentation of the pentose substrate. Both reactions occur simultaneously and in competition at the same active site. Although the small subunit is not catalytic it is essential for maximal activity. The polypeptide is Ribulose bisphosphate carboxylase small subunit 2B, chloroplastic (RBCS-2B) (Arabidopsis thaliana (Mouse-ear cress)).